A 257-amino-acid polypeptide reads, in one-letter code: GTP cyclohydrolase FolE2 (257 aa).

This sequence belongs to the GTP cyclohydrolase IV family.

It catalyses the reaction GTP + H2O = 7,8-dihydroneopterin 3'-triphosphate + formate + H(+). It participates in cofactor biosynthesis; 7,8-dihydroneopterin triphosphate biosynthesis; 7,8-dihydroneopterin triphosphate from GTP: step 1/1. In terms of biological role, converts GTP to 7,8-dihydroneopterin triphosphate. This Dictyoglomus turgidum (strain DSM 6724 / Z-1310) protein is GTP cyclohydrolase FolE2.